A 231-amino-acid chain; its full sequence is Uridylate kinase (231 aa).

6–9 (KLSG) is a binding site for ATP. The involved in allosteric activation by GTP stretch occupies residues 14–19 (GEGGRG). Residues G49 and R53 each coordinate ATP. Residues D66 and 127 to 134 (TSNPFFTT) contribute to the UMP site. The ATP site is built by T154, Y160, and D163.

Belongs to the UMP kinase family. As to quaternary structure, homohexamer.

The protein resides in the cytoplasm. It catalyses the reaction UMP + ATP = UDP + ADP. Its pathway is pyrimidine metabolism; CTP biosynthesis via de novo pathway; UDP from UMP (UMPK route): step 1/1. Its activity is regulated as follows. Allosterically activated by GTP. Inhibited by UTP. Catalyzes the reversible phosphorylation of UMP to UDP. The protein is Uridylate kinase of Thermotoga maritima (strain ATCC 43589 / DSM 3109 / JCM 10099 / NBRC 100826 / MSB8).